Reading from the N-terminus, the 155-residue chain is Ribosome maturation factor RimP (155 aa).

Belongs to the RimP family.

The protein resides in the cytoplasm. Its function is as follows. Required for maturation of 30S ribosomal subunits. This chain is Ribosome maturation factor RimP, found in Deinococcus geothermalis (strain DSM 11300 / CIP 105573 / AG-3a).